An 87-amino-acid chain; its full sequence is MSERNDRKVYVGKVVSDKMDKTITVLVETYKTHKLYGKRVKYSKKYKTHDENNSAKLGDIVKIQETRPLSATKRFRIVEIVEESVII.

This sequence belongs to the universal ribosomal protein uS17 family. Part of the 30S ribosomal subunit.

One of the primary rRNA binding proteins, it binds specifically to the 5'-end of 16S ribosomal RNA. This Staphylococcus aureus (strain Mu3 / ATCC 700698) protein is Small ribosomal subunit protein uS17.